A 250-amino-acid chain; its full sequence is Probable transcriptional regulatory protein Ctha_1786 (250 aa).

Belongs to the TACO1 family.

It localises to the cytoplasm. This Chloroherpeton thalassium (strain ATCC 35110 / GB-78) protein is Probable transcriptional regulatory protein Ctha_1786.